Here is a 226-residue protein sequence, read N- to C-terminus: Protein AhpA (226 aa).

Helical transmembrane passes span S12–V32 and G169–L189.

This sequence belongs to the Smp family.

The protein resides in the cell inner membrane. Its function is as follows. When anaerobically expressed in wild-type E.coli K12 confers a hemolytic phenotype, but not in an sheA mutant. Suggests it affects the expression of the latent E.coli K12 hemolysin sheA under anaerobic conditions. The chain is Protein AhpA (ahpA) from Pasteurella multocida (strain Pm70).